Here is a 350-residue protein sequence, read N- to C-terminus: Uroporphyrinogen decarboxylase (350 aa).

Substrate is bound by residues 28-32 (RQAGR), Asp-78, Tyr-155, Ser-210, and His-325.

The protein belongs to the uroporphyrinogen decarboxylase family. In terms of assembly, homodimer.

Its subcellular location is the cytoplasm. The catalysed reaction is uroporphyrinogen III + 4 H(+) = coproporphyrinogen III + 4 CO2. It functions in the pathway porphyrin-containing compound metabolism; protoporphyrin-IX biosynthesis; coproporphyrinogen-III from 5-aminolevulinate: step 4/4. In terms of biological role, catalyzes the decarboxylation of four acetate groups of uroporphyrinogen-III to yield coproporphyrinogen-III. The protein is Uroporphyrinogen decarboxylase of Microcystis aeruginosa (strain NIES-843 / IAM M-2473).